The following is a 170-amino-acid chain: ATP synthase subunit b (170 aa).

A helical transmembrane segment spans residues 5–25 (YFIPCLLLPTMMLASGGGGET).

This sequence belongs to the ATPase B chain family. As to quaternary structure, F-type ATPases have 2 components, F(1) - the catalytic core - and F(0) - the membrane proton channel. F(1) has five subunits: alpha(3), beta(3), gamma(1), delta(1), epsilon(1). F(0) has three main subunits: a(1), b(2) and c(10-14). The alpha and beta chains form an alternating ring which encloses part of the gamma chain. F(1) is attached to F(0) by a central stalk formed by the gamma and epsilon chains, while a peripheral stalk is formed by the delta and b chains.

The protein localises to the cell inner membrane. F(1)F(0) ATP synthase produces ATP from ADP in the presence of a proton or sodium gradient. F-type ATPases consist of two structural domains, F(1) containing the extramembraneous catalytic core and F(0) containing the membrane proton channel, linked together by a central stalk and a peripheral stalk. During catalysis, ATP synthesis in the catalytic domain of F(1) is coupled via a rotary mechanism of the central stalk subunits to proton translocation. Its function is as follows. Component of the F(0) channel, it forms part of the peripheral stalk, linking F(1) to F(0). This Wolinella succinogenes (strain ATCC 29543 / DSM 1740 / CCUG 13145 / JCM 31913 / LMG 7466 / NCTC 11488 / FDC 602W) (Vibrio succinogenes) protein is ATP synthase subunit b.